A 498-amino-acid chain; its full sequence is Glutamyl-tRNA(Gln) amidotransferase subunit A (498 aa).

Catalysis depends on charge relay system residues Lys-80 and Ser-155. The interval 132 to 159 (SSTENSAYGPTRNPWDTDRVPGGSSGGS) is disordered. Ser-179 acts as the Acyl-ester intermediate in catalysis.

This sequence belongs to the amidase family. GatA subfamily. In terms of assembly, heterotrimer of A, B and C subunits.

The catalysed reaction is L-glutamyl-tRNA(Gln) + L-glutamine + ATP + H2O = L-glutaminyl-tRNA(Gln) + L-glutamate + ADP + phosphate + H(+). In terms of biological role, allows the formation of correctly charged Gln-tRNA(Gln) through the transamidation of misacylated Glu-tRNA(Gln) in organisms which lack glutaminyl-tRNA synthetase. The reaction takes place in the presence of glutamine and ATP through an activated gamma-phospho-Glu-tRNA(Gln). This Thermobifida fusca (strain YX) protein is Glutamyl-tRNA(Gln) amidotransferase subunit A.